The chain runs to 232 residues: 7-cyano-7-deazaguanine synthase (232 aa).

8 to 18 (FSGGQDSTTCL) serves as a coordination point for ATP. Zn(2+)-binding residues include cysteine 187, cysteine 196, cysteine 199, and cysteine 202.

The protein belongs to the QueC family. It depends on Zn(2+) as a cofactor.

The catalysed reaction is 7-carboxy-7-deazaguanine + NH4(+) + ATP = 7-cyano-7-deazaguanine + ADP + phosphate + H2O + H(+). It functions in the pathway purine metabolism; 7-cyano-7-deazaguanine biosynthesis. In terms of biological role, catalyzes the ATP-dependent conversion of 7-carboxy-7-deazaguanine (CDG) to 7-cyano-7-deazaguanine (preQ(0)). The polypeptide is 7-cyano-7-deazaguanine synthase (Photobacterium profundum (strain SS9)).